A 496-amino-acid chain; its full sequence is Glutamyl-tRNA(Gln) amidotransferase subunit A (496 aa).

Catalysis depends on charge relay system residues Lys-79 and Ser-159. Catalysis depends on Ser-183, which acts as the Acyl-ester intermediate.

It belongs to the amidase family. GatA subfamily. As to quaternary structure, heterotrimer of A, B and C subunits.

The enzyme catalyses L-glutamyl-tRNA(Gln) + L-glutamine + ATP + H2O = L-glutaminyl-tRNA(Gln) + L-glutamate + ADP + phosphate + H(+). Allows the formation of correctly charged Gln-tRNA(Gln) through the transamidation of misacylated Glu-tRNA(Gln) in organisms which lack glutaminyl-tRNA synthetase. The reaction takes place in the presence of glutamine and ATP through an activated gamma-phospho-Glu-tRNA(Gln). The protein is Glutamyl-tRNA(Gln) amidotransferase subunit A of Bartonella quintana (strain Toulouse) (Rochalimaea quintana).